A 57-amino-acid polypeptide reads, in one-letter code: MIQSPTSFLIVLILLWCKLVLSCFREFIIALQQLIQVLLQIINSNLQPRLTLCHSLD.

An N-terminal signal peptide occupies residues 1–22 (MIQSPTSFLIVLILLWCKLVLS).

Its function is as follows. Involved in resistance to IFN. This Gallus gallus (Chicken) protein is Non-structural protein 3a.